Reading from the N-terminus, the 76-residue chain is Kappa-scoloptoxin(15)-Ssd3a (76 aa).

An N-terminal signal peptide occupies residues 1-23; the sequence is MEGKIIFICFLVVLLTLPELISS.

Contains 2 disulfide bonds. Expressed by the venom gland.

The protein resides in the secreted. Its function is as follows. Acts as a voltage-gated potassium channel inhibitor. The sequence is that of Kappa-scoloptoxin(15)-Ssd3a from Scolopendra dehaani (Thai centipede).